Consider the following 394-residue polypeptide: MAKEKFERNKPHVNVGTIGHVDHGKTTLTAAISSVLTKTYGGEVKDFAQIDNAPEERERGITINTSHIEYDTPSRHYAHVDCPGHADYVKNMITGAAQMDGAILVVASTDGPMPQTREHILLSRQVGVPFIIVFMNKCDMVDDEELLELVEMEVRELLSEYDFPGDDLPVIQGSALKALEGEPEWEAKILELAEALDTYIPEPERAIDGAFILPIEDVFSISGRGTVVTGRVERGIIKVGEEVEIVGIKDTTKTTCTGVEMFRKLLDEGRAGENCGVLLRGTKREDVERGQVLAAPGSITPHTTFKSEIYVLSKEEGGRHTPFFKGYRPQFYFRTTDVTGTIELPEGVEMVMPGDNVAMTVTLICPIAMDEGLRFAIREGGRTVGAGVVAEIVA.

Residues 10–204 (KPHVNVGTIG…ALDTYIPEPE (195 aa)) enclose the tr-type G domain. The tract at residues 19–26 (GHVDHGKT) is G1. 19–26 (GHVDHGKT) contacts GTP. A Mg(2+)-binding site is contributed by Thr-26. A G2 region spans residues 60–64 (GITIN). A G3 region spans residues 81–84 (DCPG). GTP-binding positions include 81–85 (DCPGH) and 136–139 (NKCD). The G4 stretch occupies residues 136-139 (NKCD). The G5 stretch occupies residues 174–176 (SAL).

It belongs to the TRAFAC class translation factor GTPase superfamily. Classic translation factor GTPase family. EF-Tu/EF-1A subfamily. In terms of assembly, monomer.

The protein localises to the cytoplasm. The enzyme catalyses GTP + H2O = GDP + phosphate + H(+). In terms of biological role, GTP hydrolase that promotes the GTP-dependent binding of aminoacyl-tRNA to the A-site of ribosomes during protein biosynthesis. The protein is Elongation factor Tu of Shewanella sediminis (strain HAW-EB3).